The sequence spans 1084 residues: TNF receptor-associated factor family protein DDB_G0272098 (1084 aa).

The LIM zinc-binding domain occupies 19–103; sequence YYCPDCGELL…KNRYYETKNF (85 aa). 2 TRAF-type zinc fingers span residues 122–190 and 191–248; these read KHIK…IDHE and IHLS…YNMS. Positions 265–321 form a coiled coil; that stretch reads IEEQNQDIKELHNFIENHLSKKFIDLDTIVNIQKYLIKNKNQKISQLTEIIKRVDNS. 4 disordered regions span residues 348–392, 490–523, 537–656, and 709–897; these read YKNS…NINE, IRQQ…NTTI, NNNI…KDGL, and SIVE…NDDD. Composition is skewed to low complexity over residues 349–375, 492–509, 537–549, and 556–570; these read KNSN…TNEN, QQQQ…QQQQ, NNNI…NNNK, and ITAA…TTST. Positions 489–553 form a coiled coil; it reads LIRQQQQQQQ…NNNNNKNNDD (65 aa). Polar residues predominate over residues 571-586; it reads HTILNGTNNEASMTDI. The segment covering 587-637 has biased composition (low complexity); sequence NETTSTTTTAETTEATASESTEESNNTAETTTTTTTTTTTITTAAETVNST. The span at 644-656 shows a compositional bias: basic and acidic residues; it reads TSEKVEEKGKDGL. The stretch at 735–852 forms a coiled coil; the sequence is NGNENENENE…NNNNNNNENV (118 aa). Positions 739–757 are enriched in acidic residues; it reads NENENENENENENENENEN. Residues 774-785 show a composition bias toward polar residues; the sequence is SNINTSNDTEPT. Over residues 790–799 the composition is skewed to basic and acidic residues; the sequence is EDIKKNKENE. The span at 809-849 shows a compositional bias: low complexity; that stretch reads NNNIKSVEDTNNNNNNNNNNNNNNNNNNNNNNNNNNNNNNN. 2 stretches are compositionally biased toward basic and acidic residues: residues 853 to 864 and 875 to 892; these read YDIKKDRNRENV and ENGK…SEDK. The region spanning 909 to 1042 is the MATH domain; that stretch reads IFRNQILFKD…DNCFIVNLEV (134 aa). Positions 1056-1084 are disordered; sequence LLQKSSPPAATTTTTTSSSSSKTTPKTKR. Positions 1059–1084 are enriched in low complexity; that stretch reads KSSPPAATTTTTTSSSSSKTTPKTKR.

Belongs to the TNF receptor-associated factor family.

The protein localises to the cytoplasm. Functionally, probable adapter protein and signal transducer that links members of the tumor necrosis factor receptor family to different signaling pathways by association with the receptor cytoplasmic domain and kinases. This is TNF receptor-associated factor family protein DDB_G0272098 from Dictyostelium discoideum (Social amoeba).